The sequence spans 182 residues: Hypoxanthine/guanine phosphoribosyltransferase (182 aa).

Belongs to the purine/pyrimidine phosphoribosyltransferase family. Archaeal HPRT subfamily. Homodimer.

The protein localises to the cytoplasm. The catalysed reaction is IMP + diphosphate = hypoxanthine + 5-phospho-alpha-D-ribose 1-diphosphate. It carries out the reaction GMP + diphosphate = guanine + 5-phospho-alpha-D-ribose 1-diphosphate. The protein operates within purine metabolism; IMP biosynthesis via salvage pathway; IMP from hypoxanthine: step 1/1. In terms of biological role, catalyzes a salvage reaction resulting in the formation of IMP that is energically less costly than de novo synthesis. This Methanosphaerula palustris (strain ATCC BAA-1556 / DSM 19958 / E1-9c) protein is Hypoxanthine/guanine phosphoribosyltransferase.